The chain runs to 674 residues: DNA ligase (674 aa).

NAD(+) contacts are provided by residues 34-38 (DSEYD), 83-84 (SL), and glutamate 114. Lysine 116 acts as the N6-AMP-lysine intermediate in catalysis. NAD(+)-binding residues include arginine 137, glutamate 174, lysine 290, and lysine 314. 4 residues coordinate Zn(2+): cysteine 405, cysteine 408, cysteine 424, and cysteine 429. The 88-residue stretch at 587–674 (QSGTQFDGKM…KLSLIENTKF (88 aa)) folds into the BRCT domain.

It belongs to the NAD-dependent DNA ligase family. LigA subfamily. It depends on Mg(2+) as a cofactor. Mn(2+) serves as cofactor.

It catalyses the reaction NAD(+) + (deoxyribonucleotide)n-3'-hydroxyl + 5'-phospho-(deoxyribonucleotide)m = (deoxyribonucleotide)n+m + AMP + beta-nicotinamide D-nucleotide.. DNA ligase that catalyzes the formation of phosphodiester linkages between 5'-phosphoryl and 3'-hydroxyl groups in double-stranded DNA using NAD as a coenzyme and as the energy source for the reaction. It is essential for DNA replication and repair of damaged DNA. This chain is DNA ligase, found in Endomicrobium trichonymphae.